Here is a 250-residue protein sequence, read N- to C-terminus: Triosephosphate isomerase (250 aa).

Residue 9-11 coordinates substrate; it reads NWK. His96 acts as the Electrophile in catalysis. Catalysis depends on Glu168, which acts as the Proton acceptor. Substrate is bound by residues Gly174, Ser216, and 237–238; that span reads GG.

The protein belongs to the triosephosphate isomerase family. Homodimer.

The protein resides in the cytoplasm. The catalysed reaction is D-glyceraldehyde 3-phosphate = dihydroxyacetone phosphate. The protein operates within carbohydrate biosynthesis; gluconeogenesis. It functions in the pathway carbohydrate degradation; glycolysis; D-glyceraldehyde 3-phosphate from glycerone phosphate: step 1/1. Involved in the gluconeogenesis. Catalyzes stereospecifically the conversion of dihydroxyacetone phosphate (DHAP) to D-glyceraldehyde-3-phosphate (G3P). This chain is Triosephosphate isomerase, found in Leptospira interrogans serogroup Icterohaemorrhagiae serovar Lai (strain 56601).